A 472-amino-acid polypeptide reads, in one-letter code: MTTQIYQVPVVSNGLRETESILQIVDSLEKLEKVFNDMYSTISARVSHEKSRIDNVANRLNNAQHKVNQIVGSKQAITVFSSAKYPADKKWGDYVPIYSGKHKLPFKPSHYHGLNSEDSPIKKRPEDSYLDVNDLVFIEKSIDTTSKEVEVKEGLGRIPAQIPSVSNLLLFNTQENPYKKYSNTLDNLSGGDGGEDDYTIFGDQLSKKKRLGDAPVTVKDGDSRIDAENVKIGYEPGTFEIPVYNFPSILPLPNVAENITWAAESQSIAPSQKATLNLLPTYDNSNSGSAPVNQSSGGDNNVNNNNNNNNSNNSTGIMQPPQPTNAPPPPPPPPQSANAPPPPPPPPVSAPPPFNPPSVNSNNDDDDDDDDDNGGGGGPGGAIGDLLADIRRGHKNRLKKADVGGDNGDGEDNKPPPVSDGGGGLMGDLFKKLALRRQSIATTKSTKKQSKSKKEDTDDQDGESDTDSSEWE.

The segment at 279 to 472 is disordered; the sequence is LPTYDNSNSG…ESDTDSSEWE (194 aa). The span at 282-299 shows a compositional bias: polar residues; that stretch reads YDNSNSGSAPVNQSSGGD. Low complexity predominate over residues 300–314; it reads NNVNNNNNNNNSNNS. Over residues 320 to 356 the composition is skewed to pro residues; sequence PPQPTNAPPPPPPPPQSANAPPPPPPPPVSAPPPFNP. Acidic residues predominate over residues 363-373; that stretch reads NDDDDDDDDDN. Positions 374 to 383 are enriched in gly residues; it reads GGGGGPGGAI. One can recognise a WH2 domain in the interval 382 to 401; it reads AIGDLLADIRRGHKNRLKKA. Residues 457-472 are compositionally biased toward acidic residues; the sequence is TDDQDGESDTDSSEWE.

This sequence belongs to the WASH1 family.

In terms of biological role, acts as a nucleation-promoting factor by activating the Arp2/3 complex to induce actin polymerization. This chain is WAS protein family homolog DDB_G0292878, found in Dictyostelium discoideum (Social amoeba).